Reading from the N-terminus, the 236-residue chain is Protein-L-isoaspartate O-methyltransferase 1 (236 aa).

Ser-85 is an active-site residue.

This sequence belongs to the methyltransferase superfamily. L-isoaspartyl/D-aspartyl protein methyltransferase family.

The protein localises to the cytoplasm. It catalyses the reaction [protein]-L-isoaspartate + S-adenosyl-L-methionine = [protein]-L-isoaspartate alpha-methyl ester + S-adenosyl-L-homocysteine. In terms of biological role, catalyzes the methyl esterification of L-isoaspartyl residues in peptides and proteins that result from spontaneous decomposition of normal L-aspartyl and L-asparaginyl residues. It plays a role in the repair and/or degradation of damaged proteins. The sequence is that of Protein-L-isoaspartate O-methyltransferase 1 from Polaromonas sp. (strain JS666 / ATCC BAA-500).